Reading from the N-terminus, the 267-residue chain is Proteasome assembly chaperone 2 (267 aa).

It belongs to the PSMG2 family. In terms of assembly, component of the 20S proteasome chaperone. Forms a heterodimer with PBA1 that binds to proteasome precursors.

The protein resides in the cytoplasm. Functionally, involved in 20S proteasome assembly. Required for maximal proteasome activity. Affects the chymotrypsin-like activity of the proteasome. Can be degraded by the proteasome. Involved in the endoplasmic reticulum-associated degradation (ERAD). The sequence is that of Proteasome assembly chaperone 2 (ADD66) from Saccharomyces cerevisiae (strain ATCC 204508 / S288c) (Baker's yeast).